Reading from the N-terminus, the 224-residue chain is UPF0758 protein XF_0148 (224 aa).

The region spanning 102–224 is the MPN domain; the sequence is SIHDPISAGR…PVSFAEHGWL (123 aa). The Zn(2+) site is built by histidine 173, histidine 175, and aspartate 186. The JAMM motif motif lies at 173–186; the sequence is HNHPSGNREPSPAD.

This sequence belongs to the UPF0758 family.

The sequence is that of UPF0758 protein XF_0148 from Xylella fastidiosa (strain 9a5c).